The sequence spans 367 residues: S-adenosylmethionine:tRNA ribosyltransferase-isomerase (367 aa).

It belongs to the QueA family. Monomer.

The protein localises to the cytoplasm. It carries out the reaction 7-aminomethyl-7-carbaguanosine(34) in tRNA + S-adenosyl-L-methionine = epoxyqueuosine(34) in tRNA + adenine + L-methionine + 2 H(+). It participates in tRNA modification; tRNA-queuosine biosynthesis. Its function is as follows. Transfers and isomerizes the ribose moiety from AdoMet to the 7-aminomethyl group of 7-deazaguanine (preQ1-tRNA) to give epoxyqueuosine (oQ-tRNA). This is S-adenosylmethionine:tRNA ribosyltransferase-isomerase from Beijerinckia indica subsp. indica (strain ATCC 9039 / DSM 1715 / NCIMB 8712).